A 264-amino-acid polypeptide reads, in one-letter code: Ribosomal RNA small subunit methyltransferase A (264 aa).

Residues H15, L17, G42, E63, D88, and N109 each contribute to the S-adenosyl-L-methionine site.

Belongs to the class I-like SAM-binding methyltransferase superfamily. rRNA adenine N(6)-methyltransferase family. RsmA subfamily.

The protein resides in the cytoplasm. It catalyses the reaction adenosine(1518)/adenosine(1519) in 16S rRNA + 4 S-adenosyl-L-methionine = N(6)-dimethyladenosine(1518)/N(6)-dimethyladenosine(1519) in 16S rRNA + 4 S-adenosyl-L-homocysteine + 4 H(+). Its function is as follows. Specifically dimethylates two adjacent adenosines (A1518 and A1519) in the loop of a conserved hairpin near the 3'-end of 16S rRNA in the 30S particle. May play a critical role in biogenesis of 30S subunits. The polypeptide is Ribosomal RNA small subunit methyltransferase A (Nitrosococcus oceani (strain ATCC 19707 / BCRC 17464 / JCM 30415 / NCIMB 11848 / C-107)).